Here is a 710-residue protein sequence, read N- to C-terminus: DNA ligase (710 aa).

Residues 53 to 57 (DAEYD), 102 to 103 (SL), and Glu-136 each bind NAD(+). Lys-138 acts as the N6-AMP-lysine intermediate in catalysis. Residues Arg-159, Glu-196, Lys-312, and Lys-336 each contribute to the NAD(+) site. Zn(2+) is bound by residues Cys-429, Cys-432, Cys-453, and Cys-459. Positions 633-710 (ETSSPVAGKT…DEDQWIELAG (78 aa)) constitute a BRCT domain.

This sequence belongs to the NAD-dependent DNA ligase family. LigA subfamily. Mg(2+) serves as cofactor. Mn(2+) is required as a cofactor.

It carries out the reaction NAD(+) + (deoxyribonucleotide)n-3'-hydroxyl + 5'-phospho-(deoxyribonucleotide)m = (deoxyribonucleotide)n+m + AMP + beta-nicotinamide D-nucleotide.. In terms of biological role, DNA ligase that catalyzes the formation of phosphodiester linkages between 5'-phosphoryl and 3'-hydroxyl groups in double-stranded DNA using NAD as a coenzyme and as the energy source for the reaction. It is essential for DNA replication and repair of damaged DNA. The polypeptide is DNA ligase (Parvibaculum lavamentivorans (strain DS-1 / DSM 13023 / NCIMB 13966)).